Here is a 38-residue protein sequence, read N- to C-terminus: Large ribosomal subunit protein bL36A (38 aa).

This sequence belongs to the bacterial ribosomal protein bL36 family.

The polypeptide is Large ribosomal subunit protein bL36A (Pseudomonas aeruginosa (strain UCBPP-PA14)).